A 663-amino-acid polypeptide reads, in one-letter code: F-box protein DAS1 (663 aa).

The region spanning 46–91 (VFPLTKLPDELMQEVFSHLPQPDRLQLCLVNKRLNKIATKLLYRRI) is the F-box domain.

Interacts with SKP1. Component of the probable SCF(DAS1) complex containing CDC53, SKP1, RBX1 and DAS1.

Its pathway is protein modification; protein ubiquitination. Substrate recognition component of a SCF (SKP1-CUL1-F-box protein) E3 ubiquitin-protein ligase complex which mediates the ubiquitination and subsequent proteasomal degradation of target proteins. Probably recognizes and binds to phosphorylated target proteins. The polypeptide is F-box protein DAS1 (DAS1) (Saccharomyces cerevisiae (strain ATCC 204508 / S288c) (Baker's yeast)).